Here is a 184-residue protein sequence, read N- to C-terminus: Photosystem I assembly protein Ycf4 (184 aa).

A run of 2 helical transmembrane segments spans residues 22 to 42 and 57 to 77; these read FCWA…GTSS and IIFF…LFIS.

This sequence belongs to the Ycf4 family.

The protein localises to the plastid. The protein resides in the chloroplast thylakoid membrane. Seems to be required for the assembly of the photosystem I complex. The chain is Photosystem I assembly protein Ycf4 from Lobularia maritima (Sweet alyssum).